The primary structure comprises 1013 residues: 2-oxoglutarate dehydrogenase, mitochondrial (1013 aa).

Residues 1 to 39 (MFTLKQVINKSIQTSMKNGVMSSAVKRSFSTVGGINQPK) constitute a mitochondrion transit peptide. Thiamine diphosphate is bound by residues Arg302, Asp403, Asn436, Ile438, and Gln664. Mg(2+) contacts are provided by Asp403, Asn436, and Ile438.

The protein belongs to the alpha-ketoglutarate dehydrogenase family. Homodimer. Component of the 2-oxoglutarate dehydrogenase complex. Thiamine diphosphate serves as cofactor. Mg(2+) is required as a cofactor.

Its subcellular location is the mitochondrion matrix. The catalysed reaction is N(6)-[(R)-lipoyl]-L-lysyl-[protein] + 2-oxoglutarate + H(+) = N(6)-[(R)-S(8)-succinyldihydrolipoyl]-L-lysyl-[protein] + CO2. The 2-oxoglutarate dehydrogenase complex catalyzes the overall conversion of 2-oxoglutarate to succinyl-CoA and CO(2). It contains multiple copies of three enzymatic components: 2-oxoglutarate dehydrogenase (E1), dihydrolipoamide succinyltransferase (E2) and lipoamide dehydrogenase (E3). In Dictyostelium discoideum (Social amoeba), this protein is 2-oxoglutarate dehydrogenase, mitochondrial (ogdh).